The chain runs to 337 residues: Glyceraldehyde-3-phosphate dehydrogenase 1 (337 aa).

NAD(+)-binding positions include 12-13, Asp-34, and Met-79; that span reads RI. D-glyceraldehyde 3-phosphate is bound by residues 151–153, Thr-182, 211–212, and Arg-234; these read SCT and TG. Catalysis depends on Cys-152, which acts as the Nucleophile. Position 316 (Asn-316) interacts with NAD(+).

It belongs to the glyceraldehyde-3-phosphate dehydrogenase family. Homotetramer.

The protein resides in the cytoplasm. It carries out the reaction D-glyceraldehyde 3-phosphate + phosphate + NAD(+) = (2R)-3-phospho-glyceroyl phosphate + NADH + H(+). It participates in carbohydrate degradation; glycolysis; pyruvate from D-glyceraldehyde 3-phosphate: step 1/5. The chain is Glyceraldehyde-3-phosphate dehydrogenase 1 (GAP1) from Giardia intestinalis (Giardia lamblia).